The sequence spans 513 residues: Glycogen synthase (513 aa).

K47 is an ADP-alpha-D-glucose binding site.

Belongs to the glycosyltransferase 1 family. Bacterial/plant glycogen synthase subfamily.

The enzyme catalyses [(1-&gt;4)-alpha-D-glucosyl](n) + ADP-alpha-D-glucose = [(1-&gt;4)-alpha-D-glucosyl](n+1) + ADP + H(+). It participates in glycan biosynthesis; glycogen biosynthesis. Its function is as follows. Synthesizes alpha-1,4-glucan chains using ADP-glucose. The polypeptide is Glycogen synthase (Pseudomonas aeruginosa (strain ATCC 15692 / DSM 22644 / CIP 104116 / JCM 14847 / LMG 12228 / 1C / PRS 101 / PAO1)).